The primary structure comprises 123 residues: Large ribosomal subunit protein uL24 (123 aa).

Belongs to the universal ribosomal protein uL24 family. As to quaternary structure, part of the 50S ribosomal subunit.

Its function is as follows. One of two assembly initiator proteins, it binds directly to the 5'-end of the 23S rRNA, where it nucleates assembly of the 50S subunit. In terms of biological role, one of the proteins that surrounds the polypeptide exit tunnel on the outside of the subunit. This Kineococcus radiotolerans (strain ATCC BAA-149 / DSM 14245 / SRS30216) protein is Large ribosomal subunit protein uL24.